We begin with the raw amino-acid sequence, 405 residues long: Formate-dependent phosphoribosylglycinamide formyltransferase (405 aa).

Residues 27-28 and Glu-87 each bind N(1)-(5-phospho-beta-D-ribosyl)glycinamide; that span reads EL. ATP-binding positions include Arg-120, Lys-162, 167 to 172, 202 to 205, and Glu-210; these read SSGKGQ and EGFI. An ATP-grasp domain is found at 125 to 320; it reads RLAAETLGLP…EFELHARALL (196 aa). Glu-279 and Glu-291 together coordinate Mg(2+). N(1)-(5-phospho-beta-D-ribosyl)glycinamide-binding positions include Asp-298, Lys-367, and 374–375; that span reads RR.

Belongs to the PurK/PurT family. As to quaternary structure, homodimer.

It carries out the reaction N(1)-(5-phospho-beta-D-ribosyl)glycinamide + formate + ATP = N(2)-formyl-N(1)-(5-phospho-beta-D-ribosyl)glycinamide + ADP + phosphate + H(+). It functions in the pathway purine metabolism; IMP biosynthesis via de novo pathway; N(2)-formyl-N(1)-(5-phospho-D-ribosyl)glycinamide from N(1)-(5-phospho-D-ribosyl)glycinamide (formate route): step 1/1. Functionally, involved in the de novo purine biosynthesis. Catalyzes the transfer of formate to 5-phospho-ribosyl-glycinamide (GAR), producing 5-phospho-ribosyl-N-formylglycinamide (FGAR). Formate is provided by PurU via hydrolysis of 10-formyl-tetrahydrofolate. This Bordetella avium (strain 197N) protein is Formate-dependent phosphoribosylglycinamide formyltransferase.